A 744-amino-acid chain; its full sequence is Collagen alpha-1(VIII) chain (744 aa).

An N-terminal signal peptide occupies residues 1 to 27; sequence MAVQPGPPQLLQVLLTISLGSIRLIQA. Residues 29–117 form a nonhelical region (NC2) region; that stretch reads AYYGIKPLPP…GKEIPLASLR (89 aa). Basic and acidic residues predominate over residues 101-110; that stretch reads KEAVPKKGKE. Disordered regions lie at residues 101–434 and 463–584; these read KEAV…PGLQ and EAGH…QGEY. The triple-helical region stretch occupies residues 118–571; sequence GEQGPRGEPG…PGPPGPPGPP (454 aa). Pro residues predominate over residues 128 to 137; that stretch reads PRGPPGPPGL. The span at 168-190 shows a compositional bias: low complexity; sequence KPGAMGMPGAKGEIGPKGEIGPM. Positions 203–217 are enriched in gly residues; that stretch reads GLPGIGKPGGPGLPG. Pro residues predominate over residues 288–298; sequence KPGPPGEPGPQ. The span at 328–337 shows a compositional bias: gly residues; sequence GFPGGKGEQG. A compositionally biased stretch (pro residues) spans 389–403; sequence PGEPGLPGIPGPMGP. Residues 411 to 420 show a composition bias toward gly residues; the sequence is GPKGEGGIVG. 2 stretches are compositionally biased toward low complexity: residues 469–506 and 540–556; these read LPGL…TGPS and LHGP…QGQP. The span at 558–579 shows a compositional bias: pro residues; sequence LPGPPGPPGPPGPPAVMPPTPA. Residues 572–744 form a nonhelical region (NC1) region; that stretch reads AVMPPTPAPQ…SFSGYLLYPM (173 aa). In terms of domain architecture, C1q spans 611-744; sequence PAYEMPAFTA…SFSGYLLYPM (134 aa).

Homotrimers, or heterotrimers in association with alpha 2(VIII) type collagens. Four homotrimers can form a tetrahedron stabilized by central interacting C-terminal NC1 trimers. In terms of processing, prolines at the third position of the tripeptide repeating unit (G-X-Y) are hydroxylated in some or all of the chains.

Its subcellular location is the secreted. It localises to the extracellular space. The protein localises to the extracellular matrix. It is found in the basement membrane. In terms of biological role, macromolecular component of the subendothelium. Major component of the Descemet's membrane (basement membrane) of corneal endothelial cells. Also a component of the endothelia of blood vessels. Necessary for migration and proliferation of vascular smooth muscle cells and thus, has a potential role in the maintenance of vessel wall integrity and structure, in particular in atherogenesis. The polypeptide is Collagen alpha-1(VIII) chain (COL8A1) (Gallus gallus (Chicken)).